The following is a 207-amino-acid chain: MVSYKLTYFNGRGAGEVSRQIFAYAGQQYEDNRVTQEQWPALKETCAAPFGQLPFLEVDGKKLAQSHAIARFLAREFKLNGKTAWEEAQVNSLADQYKDYSSEARPYFYAVMGFGPGDVETLKKDIFLPAFEKFYGFLVNFLKASGSGFLVGDSLTWIDLAIAQHSADLIAKGGDFSKFPELKAHAEKIQAIPQIKKWIETRPVTPF.

The GST N-terminal domain occupies 2 to 81; it reads VSYKLTYFNG…FLAREFKLNG (80 aa). Residues tyrosine 8, tryptophan 39, lysine 43, 51–53, and 65–66 contribute to the glutathione site; these read GQL and QS. One can recognise a GST C-terminal domain in the interval 83–207; the sequence is TAWEEAQVNS…WIETRPVTPF (125 aa).

It belongs to the GST superfamily. Sigma family.

The catalysed reaction is RX + glutathione = an S-substituted glutathione + a halide anion + H(+). In terms of biological role, conjugation of reduced glutathione to a wide number of exogenous and endogenous hydrophobic electrophiles. May play a role in the detoxification of reactive oxygen species produced during pathogenic bacterial infection. The polypeptide is Probable glutathione S-transferase 5 (gst-5) (Caenorhabditis elegans).